The following is a 1042-amino-acid chain: Exosome RNA helicase MTR4 (1042 aa).

A2 bears the N-acetylalanine mark. Residues 16-74 (DSTTAAGTKKDKEKDKGKWKGPPGSADKAGKRFDGKLQSESTNNGKNKRDVDFEGTDEP) are disordered. Residues 23 to 33 (TKKDKEKDKGK) show a composition bias toward basic and acidic residues. K24 participates in a covalent cross-link: Glycyl lysine isopeptide (Lys-Gly) (interchain with G-Cter in SUMO2). S40 bears the Phosphoserine mark. A compositionally biased stretch (basic and acidic residues) spans 43-52 (KAGKRFDGKL). K51 and K78 each carry N6-acetyllysine. ATP contacts are provided by residues I139, 161 to 168 (AHTSAGKT), S164, G166, K167, and T168. Residues 148-304 (IQCVDNNQSV…WICHLHKQPC (157 aa)) enclose the Helicase ATP-binding domain. A DEIH box motif is present at residues 252–255 (DEIH). A Glycyl lysine isopeptide (Lys-Gly) (interchain with G-Cter in SUMO2) cross-link involves residue K358. The Helicase C-terminal domain occupies 405–577 (QMTKLDFNTD…NMVLNLLRVE (173 aa)). Residues K684 and K723 each participate in a glycyl lysine isopeptide (Lys-Gly) (interchain with G-Cter in SUMO2) cross-link.

The protein belongs to the helicase family. SKI2 subfamily. As to quaternary structure, component of a TRAMP-like complex, an ATP-dependent exosome regulatory complex consisting of a helicase (MTREX), an oligadenylate polymerase (TENT4B or TENT4A), and a substrate specific RNA-binding factor (ZCCHC7 or ZCCHC8). Several TRAMP-like complexes exist with specific compositions and are associated with nuclear, or nucleolar RNA exosomes. Identified in the spliceosome C complex. Component of the poly(A) tail exosome targeting (PAXT) complex made of PABPN1, ZFC3H1 and MTREX that directs a subset of long and polyadenylated poly(A) RNAs for exosomal degradation. Component of the nuclear exosome targeting (NEXT) complex composed of MTREX, ZCCHC8, and RBM7 that directs a subset of non-coding short-lived RNAs for exosomal degradation. Interacts with ZCCHC8; this interaction bridges the interaction between RBM7 and MTREX. Binds to ZFC3H1 and RBM7 in a RNase-insensitive manner. Interacts with EXOSC10; the interaction mediates the association of MTREX with nuclear RNA exosomes. Interacts with isoform 1 of NVL in an ATP-dependent manner; the interaction is required to associate NVL with nuclear RNA exosome. Interacts with WDR74; the interaction dissociation in a late stage of rRNA synthesis is required for appropriate maturation of pre-60S particles and depends on the ATPase activity of NVL. Interacts with MPHOSPH6. Interacts with the RNA cap-binding complex proteins NCBP1 and SRRT. Interacts with NRDE2; the interaction is direct and negatively regulates MTREX function in exosomal degradation by changing its conformation precluding interaction with ZFC3H1, the RNA cap-binding complex proteins NCBP1 and SRRT, and association with the exosome. Associates with the RNA exosome complex.

It is found in the nucleus. The protein localises to the nucleoplasm. It localises to the nucleolus. The protein resides in the nucleus speckle. The catalysed reaction is ATP + H2O = ADP + phosphate + H(+). With respect to regulation, activated when MTREX is incorporated into NEXT complex an the nuclear RNA exosome complex. Its function is as follows. Catalyzes the ATP-dependent unwinding of RNA duplexes with a single-stranded 3' RNA extension. Central subunit of many protein complexes, namely TRAMP-like, nuclear exosome targeting (NEXT) and poly(A) tail exosome targeting (PAXT). NEXT functions as an RNA exosome cofactor that directs a subset of non-coding short-lived RNAs for exosomal degradation. NEXT is involved in surveillance and turnover of aberrant transcripts and non-coding RNAs. PAXT directs a subset of long and polyadenylated poly(A) RNAs for exosomal degradation. The RNA exosome is fundamental for the degradation of RNA in eukaryotic nuclei. Substrate targeting is facilitated by its cofactor ZCCHC8, which links to RNA-binding protein adapters. Associated with the RNA exosome complex and involved in the 3'-processing of the 7S pre-RNA to the mature 5.8S rRNA. May be involved in pre-mRNA splicing. In the context of NEXT complex can also in vitro unwind DNA:RNA heteroduplexes with a 3' poly (A) RNA tracking strand. Can promote unwinding and degradation of structured RNA substrates when associated with the nuclear exosome and its cofactors. Can displace a DNA strand while translocating on RNA to ultimately degrade the RNA within a DNA/RNA heteroduplex. Plays a role in DNA damage response. In Homo sapiens (Human), this protein is Exosome RNA helicase MTR4.